The chain runs to 472 residues: Forkhead box protein H1 (472 aa).

The disordered stretch occupies residues 36–56 (SSKRSCHRSSNPLLELGGRLD). The fork-head DNA-binding region spans 97–193 (KPPYSYLAMI…LKRQNTAVSR (97 aa)). Disordered stretches follow at residues 211-246 (YSQP…RPKL) and 261-360 (PASS…LPTS). Over residues 219-239 (PLPPESSLPPVPTRQSPPPSE) the composition is skewed to pro residues. Positions 294–310 (ASYNGSSSASSVSPASD) are enriched in low complexity. The interval 339 to 465 (SCPPPNKSSK…PNQYALQNGP (127 aa)) is SMAD-interaction domain (SID). Positions 357–361 (LPTSY) match the Fast/FoxH1 motif 1 (FM1) motif. The Fast/FoxH1 motif 2 (FM2) signature appears at 367–373 (PNAVAPP). The short motif at 428 to 448 (LDSMLQSVPPNKSVFDALGSN) is the SMAD interaction motif (SIM) element.

The protein localises to the nucleus. Transcriptional activator. Activates an activin response element (ARE). Recognizes and binds to the DNA sequence 5'-TGT[GT][GT]ATT-3'. Modulator of nodal signaling required for organizer formation. Also required for the development of dorsal axial structures and left-right symmetry. In Danio rerio (Zebrafish), this protein is Forkhead box protein H1 (foxh1).